Reading from the N-terminus, the 291-residue chain is Oxidative stress-responsive serine-rich protein 1 (291 aa).

The interval 48–174 (EDAKPKSACA…SSDAPQVSQA (127 aa)) is disordered. The span at 65-83 (STRKSSRGAVRTQRRRRSK) shows a compositional bias: basic residues. The span at 132-142 (ECSSSLDTNHT) shows a compositional bias: polar residues. Residues Thr142 and Thr232 each carry the phosphothreonine modification.

This is Oxidative stress-responsive serine-rich protein 1 (OSER1) from Bos taurus (Bovine).